Reading from the N-terminus, the 146-residue chain is NADH-quinone oxidoreductase subunit A (146 aa).

Transmembrane regions (helical) follow at residues 14 to 34 (FAVF…GAFF), 66 to 86 (FYLV…LYAW), and 96 to 116 (VGFI…VYLV).

This sequence belongs to the complex I subunit 3 family. NDH-1 is composed of 13 different subunits. Subunits NuoA, H, J, K, L, M, N constitute the membrane sector of the complex.

Its subcellular location is the cell inner membrane. The catalysed reaction is a quinone + NADH + 5 H(+)(in) = a quinol + NAD(+) + 4 H(+)(out). Its function is as follows. NDH-1 shuttles electrons from NADH, via FMN and iron-sulfur (Fe-S) centers, to quinones in the respiratory chain. The immediate electron acceptor for the enzyme in this species is believed to be ubiquinone. Couples the redox reaction to proton translocation (for every two electrons transferred, four hydrogen ions are translocated across the cytoplasmic membrane), and thus conserves the redox energy in a proton gradient. This Serratia proteamaculans (strain 568) protein is NADH-quinone oxidoreductase subunit A.